The primary structure comprises 423 residues: GTPase ERA-like, chloroplastic (423 aa).

Residues 1–60 (MELGLALRLVAPPPRLPCRALQPPPMPCFSPCAARRSRIRSSRLERRVGVVVSGGSMASL) constitute a chloroplast transit peptide. The 171-residue stretch at 124–294 (RSGYVAVLGK…KEWILSKLPL (171 aa)) folds into the Era-type G domain. Residues 132–139 (GKPNVGKS) are G1. Residue 132-139 (GKPNVGKS) coordinates GTP. A G2 region spans residues 158–162 (QTTRH). The tract at residues 179–182 (DTPG) is G3. Residues 179–183 (DTPGV) and 244–247 (NKKD) contribute to the GTP site. A G4 region spans residues 244-247 (NKKD). Residues 273-275 (ISA) are G5. In terms of domain architecture, KH type-2 spans 325–402 (YRQEIPYACQ…YLEIMVKVKE (78 aa)).

This sequence belongs to the TRAFAC class TrmE-Era-EngA-EngB-Septin-like GTPase superfamily. Era GTPase family.

It localises to the plastid. Its subcellular location is the chloroplast stroma. The protein resides in the chloroplast nucleoid. In terms of biological role, nuclear genome-encoded probable GTPase involved in ribosome biogenesis in chloroplasts. Plays a role in 16S rRNA maturation in plastids and may contribute to the assembly of the small (30S) ribosomal subunit. The protein is GTPase ERA-like, chloroplastic of Oryza sativa subsp. japonica (Rice).